Reading from the N-terminus, the 584-residue chain is Sperm-associated microtubule inner protein 4 (584 aa).

It is found in the cytoplasm. The protein localises to the cytoskeleton. Its subcellular location is the microtubule organizing center. The protein resides in the centrosome. It localises to the flagellum axoneme. In terms of biological role, microtubule inner protein (MIP) part of the dynein-decorated doublet microtubules (DMTs) in flagellum axoneme. May serve to reinforce and thus stabilize the microtubule structure in the sperm flagella. The chain is Sperm-associated microtubule inner protein 4 (SPMIP4) from Bos taurus (Bovine).